We begin with the raw amino-acid sequence, 280 residues long: Undecaprenyl-diphosphatase (280 aa).

The next 8 helical transmembrane spans lie at 1 to 21 (MTIL…FLPV), 41 to 61 (FVRA…LVLY), 87 to 107 (FDLY…GFLF), 115 to 135 (LGSV…MLFV), 147 to 167 (ITYP…FLPG), 186 to 206 (KAAA…ATLL), 225 to 245 (IVLL…IKFF), and 260 to 280 (YRIL…SLAV).

The protein belongs to the UppP family.

The protein localises to the cell inner membrane. It carries out the reaction di-trans,octa-cis-undecaprenyl diphosphate + H2O = di-trans,octa-cis-undecaprenyl phosphate + phosphate + H(+). Its function is as follows. Catalyzes the dephosphorylation of undecaprenyl diphosphate (UPP). Confers resistance to bacitracin. The chain is Undecaprenyl-diphosphatase from Porphyromonas gingivalis (strain ATCC 33277 / DSM 20709 / CIP 103683 / JCM 12257 / NCTC 11834 / 2561).